The chain runs to 255 residues: Zinc finger CCCH domain-containing protein 37 (255 aa).

C3H1-type zinc fingers lie at residues 98 to 128 (AYTGEPCPDFRRRPGAACPRGSTCPFAHGTF) and 137 to 159 (YRTRPCRAGVACRRRVCFFAHTA).

The protein is Zinc finger CCCH domain-containing protein 37 of Oryza sativa subsp. japonica (Rice).